The chain runs to 455 residues: Probable glycine dehydrogenase (decarboxylating) subunit 1 (455 aa).

Belongs to the GcvP family. N-terminal subunit subfamily. The glycine cleavage system is composed of four proteins: P, T, L and H. In this organism, the P 'protein' is a heterodimer of two subunits.

The enzyme catalyses N(6)-[(R)-lipoyl]-L-lysyl-[glycine-cleavage complex H protein] + glycine + H(+) = N(6)-[(R)-S(8)-aminomethyldihydrolipoyl]-L-lysyl-[glycine-cleavage complex H protein] + CO2. Functionally, the glycine cleavage system catalyzes the degradation of glycine. The P protein binds the alpha-amino group of glycine through its pyridoxal phosphate cofactor; CO(2) is released and the remaining methylamine moiety is then transferred to the lipoamide cofactor of the H protein. This chain is Probable glycine dehydrogenase (decarboxylating) subunit 1, found in Francisella tularensis subsp. holarctica (strain FTNF002-00 / FTA).